A 274-amino-acid polypeptide reads, in one-letter code: 16S rRNA (guanine(1405)-N(7))-methyltransferase (274 aa).

Residues phenylalanine 64, 102–104 (HVS), arginine 108, alanine 133, aspartate 156, 182–183 (DL), leucine 198, and glutamine 207 each bind S-adenosyl-L-methionine.

Belongs to the methyltransferase superfamily. Aminoglycoside resistance family.

The catalysed reaction is guanosine(1405) in 16S rRNA + S-adenosyl-L-methionine = N(7)-methylguanosine(1405) in 16S rRNA + S-adenosyl-L-homocysteine. Functionally, specifically methylates the N(7) position of guanine 1405 in 16S rRNA. Confers resistance to various aminoglycosides, including gentamicin and kanamycin. The polypeptide is 16S rRNA (guanine(1405)-N(7))-methyltransferase (grm) (Micromonospora echinospora (Micromonospora purpurea)).